The chain runs to 373 residues: Centrosomal protein of 41 kDa (373 aa).

Positions 91-137 (LEDNDSATSEADAEIAAKTNGKGSPEEQSPSPVQFINSTGAGDSSRS) are disordered. Residues Ser-96 and Ser-99 each carry the phosphoserine modification. At Thr-109 the chain carries Phosphothreonine. 2 positions are modified to phosphoserine: Ser-114 and Ser-121. A compositionally biased stretch (polar residues) spans 116 to 137 (EEQSPSPVQFINSTGAGDSSRS). A Rhodanese domain is found at 169–266 (PDCPFLLLDV…LAQKFPEGLV (98 aa)). Positions 317 to 373 (DQGPADNPSRLNQNNSAGKDSKVAACRGGQNLPTSCPASHSSPRTLTSGHLQGKPWK) are disordered. Residues 325–334 (SRLNQNNSAG) show a composition bias toward polar residues. Arg-343 is subject to Omega-N-methylarginine. A compositionally biased stretch (polar residues) spans 347-366 (NLPTSCPASHSSPRTLTSGH).

Belongs to the CEP41 family. As to quaternary structure, found in a complex with TTLL6.

It localises to the cytoplasm. Its subcellular location is the cytoskeleton. It is found in the microtubule organizing center. The protein resides in the centrosome. The protein localises to the cell projection. It localises to the cilium. Its subcellular location is the cilium basal body. Required during ciliogenesis for tubulin glutamylation in cilium. Probably acts by participating in the transport of TTLL6, a tubulin polyglutamylase, between the basal body and the cilium. The protein is Centrosomal protein of 41 kDa (Cep41) of Mus musculus (Mouse).